The chain runs to 430 residues: Potassium channel subfamily K member 12 (430 aa).

Over 1-38 (MSSRSPRPPPRRSRRRLPRPSCCCCCCRRSHLNEDTGR) the chain is Cytoplasmic. The ER retention/retrieval signal stretch occupies residues 11–16 (RRSRRR). Residues 39-59 (FVLLAALIGLYLVAGATVFSA) form a helical membrane-spanning segment. The N-linked (GlcNAc...) asparagine glycan is linked to Asn78. Residues 114 to 134 (WDFPGAFYFVGTVVSTIGFGM) constitute an intramembrane region (pore-forming). The K(+) site is built by Thr129, Ile130, and Gly131. Positions 129–134 (TIGFGM) are selectivity filter 1. Residues 145-165 (FLIAYGLFGCAGTILFFNLFL) form a helical membrane-spanning segment. Topologically, residues 166–212 (ERIISLLAFIMRACRERQLRRSGLLPATFRRGSALSEADSLAGWKPS) are cytoplasmic. A helical membrane pass occupies residues 213-233 (VYHVLLILGLFAVLLSCCASA). Residues 243-263 (YVDSLYFCFVTFSTIGFGDLV) constitute an intramembrane region (pore-forming). 4 residues coordinate K(+): Thr256, Ile257, Gly258, and Phe259. A selectivity filter 2 region spans residues 256-261 (TIGFGD). Residues 282 to 302 (LFILLGVCCIYSLFNVISILI) traverse the membrane as a helical segment. The Cytoplasmic segment spans residues 303-430 (KQVLNWMLRK…NRLAETSASR (128 aa)).

This sequence belongs to the two pore domain potassium channel (TC 1.A.1.8) family. Homodimer. Heterodimer with KCNK13.

The protein localises to the cell membrane. The protein resides in the endoplasmic reticulum membrane. The catalysed reaction is K(+)(in) = K(+)(out). Its function is as follows. K(+) channel subunit that may homo- and heterodimerize to form functional channels with distinct regulatory and gating properties. Can heterodimerize with KCNK13 subunit to conduct K(+) outward rectifying currents at the plasma membrane. The homodimers are mainly retained in the endoplasmic reticulum compartment and may be targeted to the cell surface upon phosphorylation or other activation signals yet to be elucidated. The polypeptide is Potassium channel subfamily K member 12 (Homo sapiens (Human)).